A 579-amino-acid chain; its full sequence is 2-succinyl-5-enolpyruvyl-6-hydroxy-3-cyclohexene-1-carboxylate synthase (579 aa).

The protein belongs to the TPP enzyme family. MenD subfamily. Homodimer. Mg(2+) serves as cofactor. Requires Mn(2+) as cofactor. Thiamine diphosphate is required as a cofactor.

The enzyme catalyses isochorismate + 2-oxoglutarate + H(+) = 5-enolpyruvoyl-6-hydroxy-2-succinyl-cyclohex-3-ene-1-carboxylate + CO2. It functions in the pathway quinol/quinone metabolism; 1,4-dihydroxy-2-naphthoate biosynthesis; 1,4-dihydroxy-2-naphthoate from chorismate: step 2/7. It participates in quinol/quinone metabolism; menaquinone biosynthesis. Functionally, catalyzes the thiamine diphosphate-dependent decarboxylation of 2-oxoglutarate and the subsequent addition of the resulting succinic semialdehyde-thiamine pyrophosphate anion to isochorismate to yield 2-succinyl-5-enolpyruvyl-6-hydroxy-3-cyclohexene-1-carboxylate (SEPHCHC). This Shewanella frigidimarina (strain NCIMB 400) protein is 2-succinyl-5-enolpyruvyl-6-hydroxy-3-cyclohexene-1-carboxylate synthase.